The primary structure comprises 182 residues: uncharacterized protein (182 aa).

The protein to M.tuberculosis Rv2313c.

This is an uncharacterized protein from Escherichia coli (strain K12).